The primary structure comprises 264 residues: Interleukin-33 (264 aa).

The homeodomain-like HTH domain stretch occupies residues 1-67 (MRPRMKYSNS…ETCYFGKEPA (67 aa)). A propeptide spanning residues 1 to 101 (MRPRMKYSNS…RSLLGSIQAF (101 aa)) is cleaved from the precursor. Residues 66 to 108 (PAKRYSLKSGSKHEGRLSTCLPDSRKRSLLGSIQAFAASVDTL) form an interaction with RELA region.

Belongs to the IL-1 family. Highly divergent. In terms of assembly, forms a 1:1:1 heterotrimeric complex with its primary high-affinity receptor IL1RL1 and the coreceptor IL1RAP. Interacts with cargo receptor TMED10; the interaction mediates the translocation from the cytoplasm into the ERGIC (endoplasmic reticulum-Golgi intermediate compartment) and thereby secretion. The full-length protein can be released from cells and is able to signal via the IL1RL1/ST2 receptor. However, proteolytic processing by CELA1, CSTG/cathepsin G and ELANE/neutrophil elastase produces C-terminal peptides that are more active than the unprocessed full-length protein. May also be proteolytically processed by calpains. Proteolytic cleavage mediated by apoptotic caspases including CASP3 and CASP7 results in IL33 inactivation. In vitro proteolytic cleavage by CASP1 was reported but could not be confirmed in vivo suggesting that IL33 is probably not a direct substrate for that caspase.

The protein resides in the nucleus. Its subcellular location is the chromosome. It is found in the cytoplasm. It localises to the cytoplasmic vesicle. The protein localises to the secretory vesicle. The protein resides in the secreted. Its function is as follows. Cytokine that binds to and signals through the IL1RL1/ST2 receptor which in turn activates NF-kappa-B and MAPK signaling pathways in target cells. Involved in the maturation of Th2 cells inducing the secretion of T-helper type 2-associated cytokines. Also involved in activation of mast cells, basophils, eosinophils and natural killer cells. Acts as a chemoattractant for Th2 cells, and may function as an 'alarmin', that amplifies immune responses during tissue injury. Induces rapid UCP2-dependent mitochondrial rewiring that attenuates the generation of reactive oxygen species and preserves the integrity of Krebs cycle required for persistent production of itaconate and subsequent GATA3-dependent differentiation of inflammation-resolving alternatively activated macrophages. In terms of biological role, in quiescent endothelia the uncleaved form is constitutively and abundantly expressed, and acts as a chromatin-associated nuclear factor with transcriptional repressor properties, it may sequester nuclear NF-kappaB/RELA, lowering expression of its targets. This form is rapidely lost upon angiogenic or pro-inflammatory activation. The chain is Interleukin-33 from Rattus norvegicus (Rat).